The sequence spans 38 residues: MKVQASVKKICRNCKVIRRKGRVMVICSAEPRHKQRQG.

It belongs to the bacterial ribosomal protein bL36 family.

The protein is Large ribosomal subunit protein bL36 of Alcanivorax borkumensis (strain ATCC 700651 / DSM 11573 / NCIMB 13689 / SK2).